We begin with the raw amino-acid sequence, 574 residues long: Acetolactate synthase large subunit (574 aa).

Position 51 (Glu-51) interacts with thiamine diphosphate. FAD contacts are provided by residues Arg-153, 261-282, and 304-323; these read HGTY…IGVR and DIDP…IVGN. The segment at 397–477 is thiamine pyrophosphate binding; sequence QHQMFAALYY…ILILNLNNKS (81 aa). Positions 448 and 475 each coordinate Mg(2+).

Belongs to the TPP enzyme family. As to quaternary structure, dimer of large and small chains. It depends on Mg(2+) as a cofactor. Thiamine diphosphate serves as cofactor.

It carries out the reaction 2 pyruvate + H(+) = (2S)-2-acetolactate + CO2. It functions in the pathway amino-acid biosynthesis; L-isoleucine biosynthesis; L-isoleucine from 2-oxobutanoate: step 1/4. The protein operates within amino-acid biosynthesis; L-valine biosynthesis; L-valine from pyruvate: step 1/4. This is Acetolactate synthase large subunit (ilvI) from Buchnera aphidicola subsp. Schlechtendalia chinensis.